We begin with the raw amino-acid sequence, 322 residues long: 4-hydroxy-3-methylbut-2-enyl diphosphate reductase (322 aa).

C15 lines the [4Fe-4S] cluster pocket. Positions 44 and 77 each coordinate (2E)-4-hydroxy-3-methylbut-2-enyl diphosphate. Positions 44 and 77 each coordinate dimethylallyl diphosphate. 2 residues coordinate isopentenyl diphosphate: H44 and H77. C99 serves as a coordination point for [4Fe-4S] cluster. H127 is a binding site for (2E)-4-hydroxy-3-methylbut-2-enyl diphosphate. Position 127 (H127) interacts with dimethylallyl diphosphate. Residue H127 participates in isopentenyl diphosphate binding. Residue E129 is the Proton donor of the active site. Residue T168 coordinates (2E)-4-hydroxy-3-methylbut-2-enyl diphosphate. Residue C198 coordinates [4Fe-4S] cluster. S226, S227, N228, and S270 together coordinate (2E)-4-hydroxy-3-methylbut-2-enyl diphosphate. Positions 226, 227, 228, and 270 each coordinate dimethylallyl diphosphate. Isopentenyl diphosphate contacts are provided by S226, S227, N228, and S270.

The protein belongs to the IspH family. [4Fe-4S] cluster is required as a cofactor.

It catalyses the reaction isopentenyl diphosphate + 2 oxidized [2Fe-2S]-[ferredoxin] + H2O = (2E)-4-hydroxy-3-methylbut-2-enyl diphosphate + 2 reduced [2Fe-2S]-[ferredoxin] + 2 H(+). The catalysed reaction is dimethylallyl diphosphate + 2 oxidized [2Fe-2S]-[ferredoxin] + H2O = (2E)-4-hydroxy-3-methylbut-2-enyl diphosphate + 2 reduced [2Fe-2S]-[ferredoxin] + 2 H(+). It functions in the pathway isoprenoid biosynthesis; dimethylallyl diphosphate biosynthesis; dimethylallyl diphosphate from (2E)-4-hydroxy-3-methylbutenyl diphosphate: step 1/1. It participates in isoprenoid biosynthesis; isopentenyl diphosphate biosynthesis via DXP pathway; isopentenyl diphosphate from 1-deoxy-D-xylulose 5-phosphate: step 6/6. Functionally, catalyzes the conversion of 1-hydroxy-2-methyl-2-(E)-butenyl 4-diphosphate (HMBPP) into a mixture of isopentenyl diphosphate (IPP) and dimethylallyl diphosphate (DMAPP). Acts in the terminal step of the DOXP/MEP pathway for isoprenoid precursor biosynthesis. The sequence is that of 4-hydroxy-3-methylbut-2-enyl diphosphate reductase from Neisseria meningitidis serogroup C (strain 053442).